The following is a 357-amino-acid chain: Naringenin,2-oxoglutarate 3-dioxygenase (357 aa).

Residues 189 to 293 (CVDMDQKIVV…RLSIATFQNP (105 aa)) form the Fe2OG dioxygenase domain. Residues His216, Asp218, and His274 each coordinate Fe cation. Position 284 (Arg284) interacts with 2-oxoglutarate.

It belongs to the iron/ascorbate-dependent oxidoreductase family. Fe(2+) is required as a cofactor. L-ascorbate serves as cofactor.

It catalyses the reaction a (2S)-flavan-4-one + 2-oxoglutarate + O2 = a (2R,3R)-dihydroflavonol + succinate + CO2. It functions in the pathway secondary metabolite biosynthesis; flavonoid biosynthesis. Catalyzes the 3-beta-hydroxylation of 2S-flavanones to 2R,3R-dihydroflavonols which are intermediates in the biosynthesis of flavonols, anthocyanidins, catechins and proanthocyanidins in plants. This chain is Naringenin,2-oxoglutarate 3-dioxygenase (FHT), found in Matthiola incana (Common stock).